Reading from the N-terminus, the 524-residue chain is M phase phosphoprotein 10 (524 aa).

The Nuclear localization signal 1 signature appears at 85 to 92 (VKRFAKNP). Disordered stretches follow at residues 100–243 (KLAL…KLGK) and 259–283 (KLKD…STHE). A compositionally biased stretch (acidic residues) spans 109–168 (DDIDEMDMDGFDSDDVDDEDKEIESNDSEGEDEEEEEEDEEEEEEEEEEEEEEKDGDNEG). The stretch at 131 to 165 (IESNDSEGEDEEEEEEDEEEEEEEEEEEEEEKDGD) forms a coiled coil. Over residues 169–180 (IEDKFFKIKELE) the composition is skewed to basic and acidic residues. The span at 181-191 (EFLEEGEAEEY) shows a compositional bias: acidic residues. Residues 196–207 (KNKKGVAQRKKQ) are compositionally biased toward basic residues. Acidic residues predominate over residues 210-238 (SDDEDEEDDDDEEEDVEFDAFAGGDDEET). The stretch at 257 to 302 (KMKLKDLSEDEEAEIENKGNEKLSTHERARLKLQSKIEQMEKANLD) forms a coiled coil. Residues 271 to 283 (IENKGNEKLSTHE) show a composition bias toward basic and acidic residues. A Nuclear localization signal 2 motif is present at residues 373 to 380 (GKREAKEL). Residues 479-524 (KGDIKDESELTQEDRKRRRANKKRKFKAESANEPPKKALDTSTKNP) are disordered. A compositionally biased stretch (basic and acidic residues) spans 480–493 (GDIKDESELTQEDR). Basic residues predominate over residues 494-504 (KRRRANKKRKF). Positions 505–517 (KAESANEPPKKAL) are enriched in basic and acidic residues.

It belongs to the MPP10 family. As to quaternary structure, component of the ribosomal small subunit (SSU) processome. Interacts with THAL in the nucleus.

It localises to the nucleus. Its subcellular location is the nucleolus. Its function is as follows. Involved in nucleolar processing of pre-18S ribosomal RNA. The polypeptide is M phase phosphoprotein 10 (Arabidopsis thaliana (Mouse-ear cress)).